A 124-amino-acid chain; its full sequence is MIYGIGTDIVYIPRILRISQKYGEKFLNKVYTKKEIEISKKYNSQEVRAKYFAKRFAAKEAFVKALGTGFSQGIIMKDIEIYSNIRGKPHLAITKDFISKDYKIHLSLSDDQDYATAFVVICVE.

The Mg(2+) site is built by Asp-8 and Glu-60.

This sequence belongs to the P-Pant transferase superfamily. AcpS family. Requires Mg(2+) as cofactor.

The protein localises to the cytoplasm. The enzyme catalyses apo-[ACP] + CoA = holo-[ACP] + adenosine 3',5'-bisphosphate + H(+). In terms of biological role, transfers the 4'-phosphopantetheine moiety from coenzyme A to a Ser of acyl-carrier-protein. The chain is Holo-[acyl-carrier-protein] synthase from Wolbachia pipientis subsp. Culex pipiens (strain wPip).